The chain runs to 404 residues: Multidrug resistance protein MdtG (404 aa).

A run of 11 helical transmembrane segments spans residues 19–39 (LGCFLTGAAFSLVMPFLPLYV), 56–76 (LVFSITFLFSAIASPFWGGLA), 90–110 (LGMAIVMLLMGMAQNIWQFLI), 113–133 (ALLGLLGGFIPNANALIATQV), 144–164 (TLSTGGVSGALLGPLAGGLLA), 171–191 (PVFFITASVLFICFLLTFFFI), 222–242 (LFVTTLIIQVATGSIAPILTL), 254–274 (IAFISGMIASVPGVAALLSAP), 288–308 (ILIVALIISVLLLIPMSFVQT), 317–337 (FLLGAADGALLPAVQTLLVYN), and 376–396 (AVFCVTAGVVLFNAIYSWNSL).

The protein belongs to the major facilitator superfamily. DHA1 family. MdtG (TC 2.A.1.2.20) subfamily.

The protein resides in the cell inner membrane. This is Multidrug resistance protein MdtG from Salmonella typhimurium (strain LT2 / SGSC1412 / ATCC 700720).